The sequence spans 273 residues: Fos-related antigen 1 (273 aa).

Disordered regions lie at residues 1 to 46 (MYRD…IDSS) and 60 to 114 (GPTG…RRER). Residues 7–35 (EPGPSSGAGSPYGRPAQPPQAQAQTAQQQ) show a composition bias toward low complexity. The bZIP domain maps to 105 to 168 (EERRRVRRER…ERLELVLEAH (64 aa)). The interval 107-127 (RRRVRRERNKLAAAKCRNRRK) is basic motif. Residues 133-161 (LQAETDKLEDEKSGLQREIEELQKQKERL) form a leucine-zipper region. The segment covering 169-182 (RPICKIPEGDKKDP) has biased composition (basic and acidic residues). Residues 169-273 (RPICKIPEGD…PLGSPTLLAL (105 aa)) form a disordered region. Composition is skewed to low complexity over residues 217–235 (LHTP…TPSL) and 254–273 (SSSS…LLAL). Phosphoserine is present on S267.

The protein belongs to the bZIP family. Fos subfamily. As to quaternary structure, heterodimer. Interacts with the BAF multiprotein chromatin-remodeling complex subunits SMARCB1 and SMARCD1. Interacts with ARID1A and JUN.

Its subcellular location is the nucleus. The chain is Fos-related antigen 1 (Fosl1) from Mus musculus (Mouse).